Consider the following 20-residue polypeptide: Pregnancy-associated glycoprotein 67A (20 aa).

2 N-linked (GlcNAc...) asparagine glycosylation sites follow: Asn4 and Asn20.

This sequence belongs to the peptidase A1 family. As to expression, chorionic epithelium (trophectoderm) and placental cotyledons.

It localises to the secreted. The protein localises to the extracellular space. The chain is Pregnancy-associated glycoprotein 67A from Bison bonasus (European bison).